The sequence spans 186 residues: Pyridoxal 5'-phosphate synthase subunit PdxT (186 aa).

Residue 46-48 (GES) coordinates L-glutamine. The active-site Nucleophile is Cys-78. L-glutamine-binding positions include Arg-105 and 134-135 (IR). Residues His-170 and Glu-172 each act as charge relay system in the active site.

The protein belongs to the glutaminase PdxT/SNO family. In terms of assembly, in the presence of PdxS, forms a dodecamer of heterodimers. Only shows activity in the heterodimer.

The enzyme catalyses aldehydo-D-ribose 5-phosphate + D-glyceraldehyde 3-phosphate + L-glutamine = pyridoxal 5'-phosphate + L-glutamate + phosphate + 3 H2O + H(+). It catalyses the reaction L-glutamine + H2O = L-glutamate + NH4(+). Its pathway is cofactor biosynthesis; pyridoxal 5'-phosphate biosynthesis. Functionally, catalyzes the hydrolysis of glutamine to glutamate and ammonia as part of the biosynthesis of pyridoxal 5'-phosphate. The resulting ammonia molecule is channeled to the active site of PdxS. The sequence is that of Pyridoxal 5'-phosphate synthase subunit PdxT from Clostridium acetobutylicum (strain ATCC 824 / DSM 792 / JCM 1419 / IAM 19013 / LMG 5710 / NBRC 13948 / NRRL B-527 / VKM B-1787 / 2291 / W).